Consider the following 446-residue polypeptide: Alkylglycerol monooxygenase (446 aa).

2 helical membrane-spanning segments follow: residues 39-59 (VNQA…LGWL) and 103-123 (FHFL…FLGV). Residues 117-248 (WLAFLGVDMG…LIIWDRMFGT (132 aa)) form the Fatty acid hydroxylase domain. The Histidine box-1 motif lies at 131–135 (HRFAH). The Histidine box-2 motif lies at 144 to 148 (HQVHH). Residues 167–187 (FSSWIFYSPLALLIPPSVFAV) traverse the membrane as a helical segment. The Histidine box-3 motif lies at 220 to 224 (HRVHH). 3 consecutive transmembrane segments (helical) span residues 329-349 (AWSP…LDVY), 362-382 (LTVI…GFLI), and 410-430 (PLLP…TIYW).

It belongs to the sterol desaturase family. TMEM195 subfamily. It depends on Fe cation as a cofactor.

It is found in the endoplasmic reticulum membrane. The enzyme catalyses 1-O-(1,2-saturated-alkyl)-sn-glycerol + (6R)-L-erythro-5,6,7,8-tetrahydrobiopterin + O2 = a 1-(1-hydroxyalkyl)-sn-glycerol + (6R)-L-erythro-6,7-dihydrobiopterin + H2O. Functionally, glyceryl-ether monooxygenase that cleaves the O-alkyl bond of ether lipids. Ether lipids are essential components of brain membranes. This is Alkylglycerol monooxygenase (agmo) from Danio rerio (Zebrafish).